Reading from the N-terminus, the 153-residue chain is Pheromone-binding protein Gp-9 (153 aa).

The first 19 residues, 1–19 (MKTFVLHIFIFALVAFASA), serve as a signal peptide directing secretion. 3 disulfides stabilise this stretch: Cys-37–Cys-77, Cys-73–Cys-129, and Cys-118–Cys-138.

It belongs to the PBP/GOBP family. In terms of assembly, homodimer.

Its subcellular location is the secreted. Functionally, colony queen number, a major feature of social organization, is associated with worker genotype for Gp-9. Colonies are headed by either a single reproductive queen (monogyne form) or multiple queens (polygyne form). Differences in worker Gp-9 genotypes between social forms may cause differences in workers' abilities to recognize queens and regulate their numbers. This chain is Pheromone-binding protein Gp-9, found in Solenopsis n. sp. (strain JP-2002) (Fire ant).